A 455-amino-acid chain; its full sequence is Bifunctional protein GlmU (455 aa).

The interval 1-227 is pyrophosphorylase; the sequence is MLTDIVILAA…ATEALGVNDP (227 aa). UDP-N-acetyl-alpha-D-glucosamine contacts are provided by residues 8 to 11, Lys22, Gln73, 78 to 79, 100 to 102, Gly137, Glu152, Asn167, and Asn225; these read LAAG, GT, and YGD. Mg(2+) is bound at residue Asp102. Residue Asn225 participates in Mg(2+) binding. The interval 228–248 is linker; sequence VQLAILERVFQRQQLRALQMQ. The interval 249–455 is N-acetyltransferase; it reads GLRVADPARV…HWQRPRRDKK (207 aa). The UDP-N-acetyl-alpha-D-glucosamine site is built by Arg331 and Lys349. His361 acts as the Proton acceptor in catalysis. Residues Tyr364 and Asn375 each contribute to the UDP-N-acetyl-alpha-D-glucosamine site. Acetyl-CoA-binding positions include Ala378, 384–385, Ser403, Ala421, and Arg438; that span reads NY. A disordered region spans residues 420–455; it reads GAGSTITKEVPPGGLTLSRSPQRTIPHWQRPRRDKK.

In the N-terminal section; belongs to the N-acetylglucosamine-1-phosphate uridyltransferase family. It in the C-terminal section; belongs to the transferase hexapeptide repeat family. As to quaternary structure, homotrimer. Requires Mg(2+) as cofactor.

The protein resides in the cytoplasm. It catalyses the reaction alpha-D-glucosamine 1-phosphate + acetyl-CoA = N-acetyl-alpha-D-glucosamine 1-phosphate + CoA + H(+). The catalysed reaction is N-acetyl-alpha-D-glucosamine 1-phosphate + UTP + H(+) = UDP-N-acetyl-alpha-D-glucosamine + diphosphate. It participates in nucleotide-sugar biosynthesis; UDP-N-acetyl-alpha-D-glucosamine biosynthesis; N-acetyl-alpha-D-glucosamine 1-phosphate from alpha-D-glucosamine 6-phosphate (route II): step 2/2. It functions in the pathway nucleotide-sugar biosynthesis; UDP-N-acetyl-alpha-D-glucosamine biosynthesis; UDP-N-acetyl-alpha-D-glucosamine from N-acetyl-alpha-D-glucosamine 1-phosphate: step 1/1. Its pathway is bacterial outer membrane biogenesis; LPS lipid A biosynthesis. In terms of biological role, catalyzes the last two sequential reactions in the de novo biosynthetic pathway for UDP-N-acetylglucosamine (UDP-GlcNAc). The C-terminal domain catalyzes the transfer of acetyl group from acetyl coenzyme A to glucosamine-1-phosphate (GlcN-1-P) to produce N-acetylglucosamine-1-phosphate (GlcNAc-1-P), which is converted into UDP-GlcNAc by the transfer of uridine 5-monophosphate (from uridine 5-triphosphate), a reaction catalyzed by the N-terminal domain. In Acidithiobacillus ferrooxidans (strain ATCC 23270 / DSM 14882 / CIP 104768 / NCIMB 8455) (Ferrobacillus ferrooxidans (strain ATCC 23270)), this protein is Bifunctional protein GlmU.